Consider the following 218-residue polypeptide: Ribose-5-phosphate isomerase A (218 aa).

Residues 28 to 31, 81 to 84, and 94 to 97 each bind substrate; these read TGST, DGAD, and KGGG. Catalysis depends on glutamate 103, which acts as the Proton acceptor. Lysine 121 is a substrate binding site.

It belongs to the ribose 5-phosphate isomerase family. Homodimer.

The enzyme catalyses aldehydo-D-ribose 5-phosphate = D-ribulose 5-phosphate. It functions in the pathway carbohydrate degradation; pentose phosphate pathway; D-ribose 5-phosphate from D-ribulose 5-phosphate (non-oxidative stage): step 1/1. Its function is as follows. Catalyzes the reversible conversion of ribose-5-phosphate to ribulose 5-phosphate. In Thioalkalivibrio sulfidiphilus (strain HL-EbGR7), this protein is Ribose-5-phosphate isomerase A.